A 204-amino-acid chain; its full sequence is High frequency lysogenization protein HflD homolog (204 aa).

It belongs to the HflD family.

Its subcellular location is the cytoplasm. The protein localises to the cell inner membrane. The polypeptide is High frequency lysogenization protein HflD homolog (Actinobacillus succinogenes (strain ATCC 55618 / DSM 22257 / CCUG 43843 / 130Z)).